The primary structure comprises 237 residues: Glutathione S-transferase psoE (237 aa).

Residues 2–79 (VFGTLYTFPG…YITSQNEQTT (78 aa)) enclose the GST N-terminal domain. The glutathione site is built by R37, K49, V50, E63, C64, and N99. Residue K49 participates in substrate binding. One can recognise a GST C-terminal domain in the interval 84–222 (DKKEYAEIIK…NNPPEKKPET (139 aa)). Residue Q108 coordinates substrate. Over residues 208 to 222 (EPKLTNNPPEKKPET) the composition is skewed to basic and acidic residues. Residues 208 to 237 (EPKLTNNPPEKKPETVPKNGAAVAIEATQA) are disordered.

The protein belongs to the GST superfamily. Requires glutathione as cofactor.

It functions in the pathway secondary metabolite biosynthesis. Glutathione S-transferase; part of the gene cluster that mediates the biosynthesis of pseurotin A, a competitive inhibitor of chitin synthase and an inducer of nerve-cell proliferation. The PKS-NRPS hybrid synthetase psoA is responsible for the biosynthesis of azaspirene, one of the first intermediates having the 1-oxa-7-azaspiro[4,4]-non-2-ene-4,6-dione core of pseurotin, via condensation of one acetyl-CoA, 4 malonyl-CoA, and a L-phenylalanine molecule. The dual-functional monooxygenase/methyltransferase psoF seems to be involved in the addition of the C3 methyl group onto the pseurotin scaffold. Azaspirene is then converted to synerazol through 4 steps including oxidation of C17 by the cytochrome P450 monooxygenase psoD, O-methylation of the hydroxy group of C8 by the methyltransferase psoC, and the trans-to-cis isomerization of the C13 olefin by the glutathione S-transferase psoE. The fourth step of synerazol production is performed by the dual-functional monooxygenase/methyltransferase psoF which seems to catalyze the epoxidation of the intermediate deepoxy-synerazol. Synerazol can be attacked by a water molecule nonenzymatically at two different positions to yield two diol products, pseurotin A and pseurotin D. The sequence is that of Glutathione S-transferase psoE from Aspergillus fumigatus (strain ATCC MYA-4609 / CBS 101355 / FGSC A1100 / Af293) (Neosartorya fumigata).